The primary structure comprises 232 residues: Ribonuclease P protein component 3 (232 aa).

This sequence belongs to the eukaryotic/archaeal RNase P protein component 3 family. Consists of a catalytic RNA component and at least 5 protein subunits.

The protein localises to the cytoplasm. The catalysed reaction is Endonucleolytic cleavage of RNA, removing 5'-extranucleotides from tRNA precursor.. Its function is as follows. Part of ribonuclease P, a protein complex that generates mature tRNA molecules by cleaving their 5'-ends. The protein is Ribonuclease P protein component 3 of Methanococcus maripaludis (strain DSM 14266 / JCM 13030 / NBRC 101832 / S2 / LL).